A 338-amino-acid polypeptide reads, in one-letter code: MSSAGKLPSEIERTLVRKSGAWTNPVYGCAPEKRPILEYIEKGVVNIDKPSGPTSHEVAAWVKAILGVNTAGHAGSLDPKVTGLLPTLLGKATKAVPALRLSGKEYVCHLKLHRAMPPKLVRKVCEEFTGPIYQMPPIKSAVKRVIRVRTIYYIEVLEIEGMSVLFRVGCEAGTYIRKLCHDIGLALGCGGHMQALRRTKAGPFTEKTLVTLHELKDAYVFWKEDGDESELRRVIRPMESAVSHLPKIILRDSAVDAVCSGASLAVPGITSLDSSLAEGELAALFTLKGELVALAKAEMNTEEILKASAGIAASPIRVLMEAGTYPKGWTKKEESVRL.

The active-site Nucleophile is Asp78. Residues 245–320 (LPKIILRDSA…IAASPIRVLM (76 aa)) form the PUA domain.

It belongs to the pseudouridine synthase TruB family. Type 2 subfamily.

It catalyses the reaction uridine(55) in tRNA = pseudouridine(55) in tRNA. Could be responsible for synthesis of pseudouridine from uracil-55 in the psi GC loop of transfer RNAs. This Methanosarcina acetivorans (strain ATCC 35395 / DSM 2834 / JCM 12185 / C2A) protein is Probable tRNA pseudouridine synthase B.